Consider the following 352-residue polypeptide: Glutamine synthetase (352 aa).

The 80-residue stretch at Tyr3–Thr82 folds into the GS beta-grasp domain. The 266-residue stretch at Thr87–Val352 folds into the GS catalytic domain. Positions 108 and 110 each coordinate Mg(2+). Glu164 is a binding site for ATP. Residues Glu169 and Glu176 each contribute to the Mg(2+) site. Residue Glu272 coordinates L-glutamate.

Belongs to the glutamine synthetase family. Homooctamer and homotetramer. Mg(2+) serves as cofactor.

Its subcellular location is the cytoplasm. It carries out the reaction L-glutamate + NH4(+) + ATP = L-glutamine + ADP + phosphate + H(+). Functionally, catalyzes the ATP-dependent biosynthesis of glutamine from glutamate and ammonia. In Frankia alni, this protein is Glutamine synthetase.